The following is a 212-amino-acid chain: Uracil phosphoribosyltransferase (212 aa).

Residues arginine 78, arginine 103, and 130–138 contribute to the 5-phospho-alpha-D-ribose 1-diphosphate site; that span reads DPMLATGSS. Uracil is bound by residues isoleucine 193 and 198–200; that span reads GDA. A 5-phospho-alpha-D-ribose 1-diphosphate-binding site is contributed by aspartate 199.

It belongs to the UPRTase family. The cofactor is Mg(2+).

It catalyses the reaction UMP + diphosphate = 5-phospho-alpha-D-ribose 1-diphosphate + uracil. The protein operates within pyrimidine metabolism; UMP biosynthesis via salvage pathway; UMP from uracil: step 1/1. With respect to regulation, allosterically activated by GTP. Catalyzes the conversion of uracil and 5-phospho-alpha-D-ribose 1-diphosphate (PRPP) to UMP and diphosphate. This is Uracil phosphoribosyltransferase from Pseudomonas syringae pv. tomato (strain ATCC BAA-871 / DC3000).